Consider the following 586-residue polypeptide: Proline--tRNA ligase (586 aa).

It belongs to the class-II aminoacyl-tRNA synthetase family. ProS type 1 subfamily. In terms of assembly, homodimer.

The protein resides in the cytoplasm. It carries out the reaction tRNA(Pro) + L-proline + ATP = L-prolyl-tRNA(Pro) + AMP + diphosphate. Functionally, catalyzes the attachment of proline to tRNA(Pro) in a two-step reaction: proline is first activated by ATP to form Pro-AMP and then transferred to the acceptor end of tRNA(Pro). As ProRS can inadvertently accommodate and process non-cognate amino acids such as alanine and cysteine, to avoid such errors it has two additional distinct editing activities against alanine. One activity is designated as 'pretransfer' editing and involves the tRNA(Pro)-independent hydrolysis of activated Ala-AMP. The other activity is designated 'posttransfer' editing and involves deacylation of mischarged Ala-tRNA(Pro). The misacylated Cys-tRNA(Pro) is not edited by ProRS. This Kineococcus radiotolerans (strain ATCC BAA-149 / DSM 14245 / SRS30216) protein is Proline--tRNA ligase.